We begin with the raw amino-acid sequence, 375 residues long: Succinyl-diaminopimelate desuccinylase (375 aa).

His66 is a binding site for Zn(2+). Asp68 is a catalytic residue. Residue Asp99 participates in Zn(2+) binding. Glu133 functions as the Proton acceptor in the catalytic mechanism. Glu134, Glu162, and His348 together coordinate Zn(2+).

The protein belongs to the peptidase M20A family. DapE subfamily. In terms of assembly, homodimer. It depends on Zn(2+) as a cofactor. Requires Co(2+) as cofactor.

The catalysed reaction is N-succinyl-(2S,6S)-2,6-diaminopimelate + H2O = (2S,6S)-2,6-diaminopimelate + succinate. It participates in amino-acid biosynthesis; L-lysine biosynthesis via DAP pathway; LL-2,6-diaminopimelate from (S)-tetrahydrodipicolinate (succinylase route): step 3/3. Catalyzes the hydrolysis of N-succinyl-L,L-diaminopimelic acid (SDAP), forming succinate and LL-2,6-diaminopimelate (DAP), an intermediate involved in the bacterial biosynthesis of lysine and meso-diaminopimelic acid, an essential component of bacterial cell walls. The protein is Succinyl-diaminopimelate desuccinylase of Aeromonas hydrophila subsp. hydrophila (strain ATCC 7966 / DSM 30187 / BCRC 13018 / CCUG 14551 / JCM 1027 / KCTC 2358 / NCIMB 9240 / NCTC 8049).